The sequence spans 238 residues: Uridylate kinase (238 aa).

12-15 (KLSG) is an ATP binding site. The involved in allosteric activation by GTP stretch occupies residues 20-25 (GEKGFG). G54 is a UMP binding site. Positions 55 and 59 each coordinate ATP. Residues D74 and 135–142 (TGSPYFST) each bind UMP. ATP-binding residues include N163, Y169, and D172.

Belongs to the UMP kinase family. Homohexamer.

It localises to the cytoplasm. It carries out the reaction UMP + ATP = UDP + ADP. It functions in the pathway pyrimidine metabolism; CTP biosynthesis via de novo pathway; UDP from UMP (UMPK route): step 1/1. With respect to regulation, allosterically activated by GTP. Inhibited by UTP. Its function is as follows. Catalyzes the reversible phosphorylation of UMP to UDP. The sequence is that of Uridylate kinase from Lactococcus lactis subsp. lactis (strain IL1403) (Streptococcus lactis).